A 966-amino-acid chain; its full sequence is Leucine--tRNA ligase (966 aa).

A 'HIGH' region motif is present at residues 71–82 (PYPSGAGLHVGH). The segment at 561-580 (YSPRTFDPDDADTKPETPLS) is disordered. A compositionally biased stretch (basic and acidic residues) spans 571–580 (ADTKPETPLS). A 'KMSKS' region motif is present at residues 734–738 (KMGKS). Lysine 737 is a binding site for ATP.

It belongs to the class-I aminoacyl-tRNA synthetase family.

The protein localises to the cytoplasm. The catalysed reaction is tRNA(Leu) + L-leucine + ATP = L-leucyl-tRNA(Leu) + AMP + diphosphate. The polypeptide is Leucine--tRNA ligase (Streptomyces coelicolor (strain ATCC BAA-471 / A3(2) / M145)).